We begin with the raw amino-acid sequence, 227 residues long: Putative ankyrin repeat protein RF_0314 (227 aa).

ANK repeat units follow at residues 94 to 126, 130 to 164, and 168 to 199; these read NGCTFLHYSVEDVKVLYDNIPQFLLEKGADPNI, DGNTPLHILINRDFFSSKEIYVAKLLIQYGADIEL, and LGWTPIQCFIQAGNIKLKALLQLVKACKDNDF.

This chain is Putative ankyrin repeat protein RF_0314, found in Rickettsia felis (strain ATCC VR-1525 / URRWXCal2) (Rickettsia azadi).